Consider the following 1009-residue polypeptide: RNA2 polyprotein (1009 aa).

The interval 387–393 (FVYKIGG) is involved in tubule formation by the movement protein.

Interacts with the large capsid protein. As to quaternary structure, interacts with the small capsid protein. Homomultimer; assembles as pentons. Interacts with the movement protein (via C-terminus). In terms of assembly, interacts (via C-terminus) with the large capsid protein. Specific enzymatic cleavages by picornain 3C-like protease in vivo yield mature proteins.

It localises to the host cell junction. The protein resides in the host plasmodesma. The protein localises to the virion. In terms of biological role, responsible for viral RNA2 accumulation. May function by recruiting the RNA1-encoded polyprotein that contains the replication protein to RNA2 and enable its replication. Transports the viral genome to neighboring plant cells directly through plasmosdesmata, without any budding. The movement protein allows efficient cell to cell propagation, by bypassing the host cell wall barrier. Acts by forming a tubular structure at the host plasmodesmata, enlarging it enough to allow free passage of virion capsids. Binds to GTP and to single-stranded RNA and single-stranded DNA in a non-sequence-specific manner. Functionally, together with the small capsid protein, forms an icosahedral capsid (T=3) enclosing the viral positive strand RNA genome, with a diameter of approximately 300 Angstroms. The capsid is formed from 60 copies each of the large and the small capsid protein. The large capsid protein interacts with the viral RNA. Its function is as follows. Together with the large capsid protein, forms an icosahedral capsid (T=3) enclosing the viral positive strand RNA genome, with a diameter of approximately 300 Angstroms. The capsid is formed from 60 copies each of the large and the small capsid protein. The small capsid protein forms the turrets at the fivefold axes of the viral particle. The sequence is that of RNA2 polyprotein from Squash mosaic virus (strain melon) (SqMV).